We begin with the raw amino-acid sequence, 276 residues long: Undecaprenyl-diphosphatase 2 (276 aa).

8 consecutive transmembrane segments (helical) span residues methionine 1–valine 21, glutamine 44–phenylalanine 64, glycine 87–leucine 107, valine 114–leucine 134, methionine 150–phenylalanine 170, alanine 190–leucine 210, aspartate 222–methionine 242, and leucine 251–leucine 271.

Belongs to the UppP family.

Its subcellular location is the cell inner membrane. It catalyses the reaction di-trans,octa-cis-undecaprenyl diphosphate + H2O = di-trans,octa-cis-undecaprenyl phosphate + phosphate + H(+). Functionally, catalyzes the dephosphorylation of undecaprenyl diphosphate (UPP). Confers resistance to bacitracin. The chain is Undecaprenyl-diphosphatase 2 from Burkholderia orbicola (strain AU 1054).